A 1067-amino-acid polypeptide reads, in one-letter code: TBC1 domain family member 31 (1067 aa).

WD repeat units follow at residues 36-75 (GKVV…FRLV), 76-119 (LKTG…SWMR), 120-161 (GHEG…KLNI), 162-201 (RQSV…CKYQ), 202-249 (LPLP…RVIQ), and 250-288 (MPSQ…RFIN). One can recognise a Rab-GAP TBC domain in the interval 419–594 (EYPAKYRMFV…RLFDNIFSNH (176 aa)). Residues 724–773 (QQELLQKAEEQRKHVLEQEEEKLTQQRAKLAAMKRELKVKELQLLDATRR) are a coiled coil. 2 stretches are compositionally biased toward basic and acidic residues: residues 896 to 912 (KADA…EELQ) and 926 to 937 (MREEAHRKKDEA). Disordered stretches follow at residues 896–955 (KADA…HSDG) and 1045–1067 (AARA…PVSP). Composition is skewed to polar residues over residues 941–953 (IQES…STHS) and 1052–1067 (SSAS…PVSP).

Its subcellular location is the cytoplasm. The protein resides in the cytoskeleton. It localises to the microtubule organizing center. It is found in the centrosome. The protein localises to the centriolar satellite. Its subcellular location is the cilium basal body. Molecular adapter which is involved in cilium biogenesis. Part of a functional complex including OFD1 a centriolar protein involved in cilium assembly. Could regulate the cAMP-dependent phosphorylation of OFD1, and its subsequent ubiquitination by PJA2 which ultimately leads to its proteasomal degradation. This chain is TBC1 domain family member 31, found in Oryzias latipes (Japanese rice fish).